The chain runs to 207 residues: Dephospho-CoA kinase (207 aa).

The 198-residue stretch at 10-207 (ILGLTGGIGS…FYLTLSGGQS (198 aa)) folds into the DPCK domain. Residue 18–23 (GSGKSA) participates in ATP binding.

This sequence belongs to the CoaE family.

Its subcellular location is the cytoplasm. The enzyme catalyses 3'-dephospho-CoA + ATP = ADP + CoA + H(+). It participates in cofactor biosynthesis; coenzyme A biosynthesis; CoA from (R)-pantothenate: step 5/5. Catalyzes the phosphorylation of the 3'-hydroxyl group of dephosphocoenzyme A to form coenzyme A. This chain is Dephospho-CoA kinase, found in Pseudomonas fluorescens (strain Pf0-1).